The following is a 543-amino-acid chain: MSQKMDFDAIVIGGGFGGLYAVKKLRDELELKVQAFDKATDVAGTWYWNRYPGALTDTETHLYCYSWDKELLQSLEIKKKYVQGPDVRKYLQQVAEKHDLKKSYQFNTAVQSAHYNEADALWEVTTEYGDKYTARFLITALGLLSAPNLPNIKGINQFKGELHHTSRWPDDVSFEGKRVGVIGTGSTGVQVITAVAPLAKHLTVFQRSAQYSVPIGNDPLSEEDVKKIKDNYDKSLGWCMNSALAFALNESTVPAMSVSAEERKAVFEKAWQTGGGFRFMFETFGDIATNMEANIEAQNFIKGKIAEIVKDPAIAQKLMPQDLYAKRPLCDSGYYNTFNRDNVRLEDVKANPIVEITENGVKLENGDFVELDMLICATGFDAVDGNYVRMDIQGKNGLAMKDYWKEGPSSYMGVTVNNYPNMFMVLGPNGPFTNLPPSIESQVEWISDTIQYTVENNVESIEATKEAEEQWTQTCANIAEMTLFPKAQSWIFGANIPGKKNTVYFYLGGLKEYRTCASNCKNHAYEGFDIQLQRSDIKQPANA.

Residues Phe16, Asp37, Trp46, Asp57, Tyr63, and Val110 each contribute to the FAD site.

This sequence belongs to the FAD-binding monooxygenase family. FAD is required as a cofactor.

It catalyses the reaction cyclohexanone + NADPH + O2 + H(+) = hexano-6-lactone + NADP(+) + H2O. The sequence is that of Cyclohexanone 1,2-monooxygenase from Acinetobacter sp.